We begin with the raw amino-acid sequence, 216 residues long: MSFLFSSRSSKTFKPKKNIPEGSHQYELLKHAEATLGSGNLRQAVMLPEGEDLNEWIAVNTVDFFNQINMLYGTITEFCTEASCPVMSAGPRYEYHWADGTNIKKPIKCSAPKYIDYLMTWVQDQLDDETLFPSKIGVPFPKNFMSVAKTILKRLFRVYAHIYHQHFDSVMQLQEEAHLNTSFKHFIFFVQEFNLIDRRELAPLQELIEKLGSKDR.

Ser2 is modified (N-acetylserine). Thr12 and Thr35 each carry phosphothreonine. Thr74 is subject to Phosphothreonine; by STK3/MST2. The Zn(2+) site is built by Cys79, Cys84, His161, and His166. Thr181 is subject to Phosphothreonine.

It belongs to the MOB1/phocein family. As to quaternary structure, binds STK38 and STK38L. Interacts with LATS1 and LATS2. Forms a tripartite complex with STK38 and STK3/MST2. In terms of processing, phosphorylated by STK3/MST2 and STK4/MST1 and this phosphorylation enhances its binding to LATS1. Adrenal gland, bone marrow, brain, placenta, prostate, salivary gland, skeletal muscle, testis, thymus, thyroid gland, heart, spinal cord, fetal brain and fetal liver.

Activator of LATS1/2 in the Hippo signaling pathway which plays a pivotal role in organ size control and tumor suppression by restricting proliferation and promoting apoptosis. The core of this pathway is composed of a kinase cascade wherein STK3/MST2 and STK4/MST1, in complex with its regulatory protein SAV1, phosphorylates and activates LATS1/2 in complex with its regulatory protein MOB1, which in turn phosphorylates and inactivates YAP1 oncoprotein and WWTR1/TAZ. Phosphorylation of YAP1 by LATS1/2 inhibits its translocation into the nucleus to regulate cellular genes important for cell proliferation, cell death, and cell migration. Stimulates the kinase activity of STK38 and STK38L. Acts cooperatively with STK3/MST2 to activate STK38. This chain is MOB kinase activator 1A, found in Homo sapiens (Human).